We begin with the raw amino-acid sequence, 208 residues long: Interleukin-6 (208 aa).

A signal peptide spans 1–29; sequence MNSRFTSAFTPFAVSLGLLLVMTSAFPTP. N-linked (GlcNAc...) asparagine glycosylation occurs at asparagine 38. Cysteine 72 and cysteine 78 are disulfide-bonded. The residue at position 81 (serine 81) is a Phosphoserine. Cysteine 101 and cysteine 111 are disulfide-bonded.

The protein belongs to the IL-6 superfamily. As to quaternary structure, component of a hexamer of two molecules each of IL6, IL6R and IL6ST; first binds to IL6R to associate with the signaling subunit IL6ST. Interacts with IL6R (via the N-terminal ectodomain); this interaction may be affected by IL6R-binding with SORL1, hence decreasing IL6 cis signaling. Interacts with SORL1 (via the N-terminal ectodomain); this interaction leads to IL6 internalization and lysosomal degradation. May form a trimeric complex with the soluble SORL1 ectodomain and soluble IL6R receptor; this interaction might stabilize circulating IL6, hence promoting IL6 trans signaling.

It localises to the secreted. Cytokine with a wide variety of biological functions in immunity, tissue regeneration, and metabolism. Binds to IL6R, then the complex associates to the signaling subunit IL6ST/gp130 to trigger the intracellular IL6-signaling pathway. The interaction with the membrane-bound IL6R and IL6ST stimulates 'classic signaling', whereas the binding of IL6 and soluble IL6R to IL6ST stimulates 'trans-signaling'. Alternatively, 'cluster signaling' occurs when membrane-bound IL6:IL6R complexes on transmitter cells activate IL6ST receptors on neighboring receiver cells. In terms of biological role, IL6 is a potent inducer of the acute phase response. Rapid production of IL6 contributes to host defense during infection and tissue injury, but excessive IL6 synthesis is involved in disease pathology. In the innate immune response, is synthesized by myeloid cells, such as macrophages and dendritic cells, upon recognition of pathogens through toll-like receptors (TLRs) at the site of infection or tissue injury. In the adaptive immune response, is required for the differentiation of B cells into immunoglobulin-secreting cells. Plays a major role in the differentiation of CD4(+) T cell subsets. Essential factor for the development of T follicular helper (Tfh) cells that are required for the induction of germinal-center formation. Required to drive naive CD4(+) T cells to the Th17 lineage. Also required for proliferation of myeloma cells and the survival of plasmablast cells. Its function is as follows. Acts as an essential factor in bone homeostasis and on vessels directly or indirectly by induction of VEGF, resulting in increased angiogenesis activity and vascular permeability. Induces, through 'trans-signaling' and synergistically with IL1B and TNF, the production of VEGF. Involved in metabolic controls, is discharged into the bloodstream after muscle contraction increasing lipolysis and improving insulin resistance. 'Trans-signaling' in central nervous system also regulates energy and glucose homeostasis. Mediates, through GLP-1, crosstalk between insulin-sensitive tissues, intestinal L cells and pancreatic islets to adapt to changes in insulin demand. Also acts as a myokine. Plays a protective role during liver injury, being required for maintenance of tissue regeneration. Also has a pivotal role in iron metabolism by regulating HAMP/hepcidin expression upon inflammation or bacterial infection. Through activation of IL6ST-YAP-NOTCH pathway, induces inflammation-induced epithelial regeneration. This chain is Interleukin-6 (IL6), found in Bubalus bubalis (Domestic water buffalo).